The sequence spans 322 residues: ATP-dependent 6-phosphofructokinase (322 aa).

Residues glycine 12, 73-74 (RF), and 103-106 (GDGT) contribute to the ATP site. Residue aspartate 104 participates in Mg(2+) binding. Residue 126-128 (TID) participates in substrate binding. Aspartate 128 acts as the Proton acceptor in catalysis. Arginine 155 is an ADP binding site. Residues arginine 163 and 170–172 (MGR) contribute to the substrate site. Residues 186–188 (GSE), lysine 212, and 214–216 (KPS) contribute to the ADP site. Substrate is bound by residues glutamate 223, arginine 245, and 251 to 254 (HTQR).

This sequence belongs to the phosphofructokinase type A (PFKA) family. ATP-dependent PFK group I subfamily. Prokaryotic clade 'B1' sub-subfamily. As to quaternary structure, homotetramer. It depends on Mg(2+) as a cofactor.

Its subcellular location is the cytoplasm. It carries out the reaction beta-D-fructose 6-phosphate + ATP = beta-D-fructose 1,6-bisphosphate + ADP + H(+). The protein operates within carbohydrate degradation; glycolysis; D-glyceraldehyde 3-phosphate and glycerone phosphate from D-glucose: step 3/4. With respect to regulation, allosterically activated by ADP and other diphosphonucleosides, and allosterically inhibited by phosphoenolpyruvate. Catalyzes the phosphorylation of D-fructose 6-phosphate to fructose 1,6-bisphosphate by ATP, the first committing step of glycolysis. The protein is ATP-dependent 6-phosphofructokinase of Mesomycoplasma hyopneumoniae (strain J / ATCC 25934 / NCTC 10110) (Mycoplasma hyopneumoniae).